A 205-amino-acid polypeptide reads, in one-letter code: Phospholipase D (205 aa).

Positions M1–G22 are cleaved as a signal peptide. Residues V142–A169 enclose the PLD phosphodiesterase domain. Catalysis depends on residues H147, K149, and D154.

This sequence belongs to the phospholipase D family. Homodimer.

The protein localises to the secreted. The enzyme catalyses a 1,2-diacyl-sn-glycero-3-phosphocholine + H2O = a 1,2-diacyl-sn-glycero-3-phosphate + choline + H(+). Could be a virulence factor. This chain is Phospholipase D (pld), found in Rickettsia prowazekii (strain Madrid E).